A 154-amino-acid chain; its full sequence is Myoglobin (154 aa).

Residues glycine 2–lysine 148 form the Globin domain. Phosphoserine is present on serine 4. Nitrite is bound at residue histidine 65. Histidine 65 is an O2 binding site. A Phosphothreonine modification is found at threonine 68. Histidine 94 serves as a coordination point for heme b.

This sequence belongs to the globin family. As to quaternary structure, monomeric.

The protein resides in the cytoplasm. Its subcellular location is the sarcoplasm. It carries out the reaction Fe(III)-heme b-[protein] + nitric oxide + H2O = Fe(II)-heme b-[protein] + nitrite + 2 H(+). The catalysed reaction is H2O2 + AH2 = A + 2 H2O. Its function is as follows. Monomeric heme protein which primary function is to store oxygen and facilitate its diffusion within muscle tissues. Reversibly binds oxygen through a pentacoordinated heme iron and enables its timely and efficient release as needed during periods of heightened demand. Depending on the oxidative conditions of tissues and cells, and in addition to its ability to bind oxygen, it also has a nitrite reductase activity whereby it regulates the production of bioactive nitric oxide. Under stress conditions, like hypoxia and anoxia, it also protects cells against reactive oxygen species thanks to its pseudoperoxidase activity. This is Myoglobin (MB) from Peponocephala electra (Melon-headed whale).